A 155-amino-acid polypeptide reads, in one-letter code: SsrA-binding protein (155 aa).

The segment at 136-155 (RESLKRRQDQRDMQRAMKNY) is disordered.

This sequence belongs to the SmpB family.

It localises to the cytoplasm. Required for rescue of stalled ribosomes mediated by trans-translation. Binds to transfer-messenger RNA (tmRNA), required for stable association of tmRNA with ribosomes. tmRNA and SmpB together mimic tRNA shape, replacing the anticodon stem-loop with SmpB. tmRNA is encoded by the ssrA gene; the 2 termini fold to resemble tRNA(Ala) and it encodes a 'tag peptide', a short internal open reading frame. During trans-translation Ala-aminoacylated tmRNA acts like a tRNA, entering the A-site of stalled ribosomes, displacing the stalled mRNA. The ribosome then switches to translate the ORF on the tmRNA; the nascent peptide is terminated with the 'tag peptide' encoded by the tmRNA and targeted for degradation. The ribosome is freed to recommence translation, which seems to be the essential function of trans-translation. The sequence is that of SsrA-binding protein from Nostoc sp. (strain PCC 7120 / SAG 25.82 / UTEX 2576).